A 210-amino-acid polypeptide reads, in one-letter code: Na(+)-translocating NADH-quinone reductase subunit D (210 aa).

The next 6 helical transmembrane spans lie at 14–34 (PIVN…ALAV), 42–62 (LVMA…ISMI), 72–92 (IIVQ…LLQA), 103–123 (VFVG…AYAM), 131–151 (FMDG…VGFV), and 178–198 (NGLL…IWII).

Belongs to the NqrDE/RnfAE family. Composed of six subunits; NqrA, NqrB, NqrC, NqrD, NqrE and NqrF.

Its subcellular location is the cell inner membrane. The catalysed reaction is a ubiquinone + n Na(+)(in) + NADH + H(+) = a ubiquinol + n Na(+)(out) + NAD(+). Its function is as follows. NQR complex catalyzes the reduction of ubiquinone-1 to ubiquinol by two successive reactions, coupled with the transport of Na(+) ions from the cytoplasm to the periplasm. NqrA to NqrE are probably involved in the second step, the conversion of ubisemiquinone to ubiquinol. This Shewanella baltica (strain OS223) protein is Na(+)-translocating NADH-quinone reductase subunit D.